A 246-amino-acid chain; its full sequence is Probable S-methyl-5'-thioinosine phosphorylase (246 aa).

Residues Thr10 and 52–53 (RH) contribute to the phosphate site. Met185 lines the substrate pocket. Thr186 is a binding site for phosphate. A substrate-binding site is contributed by 209-211 (NPA).

Belongs to the PNP/MTAP phosphorylase family. MTAP subfamily. Homotrimer.

It catalyses the reaction S-methyl-5'-thioinosine + phosphate = 5-(methylsulfanyl)-alpha-D-ribose 1-phosphate + hypoxanthine. It participates in purine metabolism; purine nucleoside salvage. In terms of biological role, catalyzes the reversible phosphorylation of S-methyl-5'-thioinosine (MTI) to hypoxanthine and 5-methylthioribose-1-phosphate. Involved in the breakdown of S-methyl-5'-thioadenosine (MTA), a major by-product of polyamine biosynthesis. Catabolism of (MTA) occurs via deamination to MTI and phosphorolysis to hypoxanthine. The polypeptide is Probable S-methyl-5'-thioinosine phosphorylase (Pseudomonas syringae pv. tomato (strain ATCC BAA-871 / DC3000)).